Here is a 186-residue protein sequence, read N- to C-terminus: dCTP deaminase (186 aa).

Residue 107–112 (KSTYAR) coordinates dCTP. The active-site Proton donor/acceptor is the Glu-133. DCTP contacts are provided by Gln-152, Tyr-166, and Gln-176.

It belongs to the dCTP deaminase family. As to quaternary structure, homotrimer.

The enzyme catalyses dCTP + H2O + H(+) = dUTP + NH4(+). It functions in the pathway pyrimidine metabolism; dUMP biosynthesis; dUMP from dCTP (dUTP route): step 1/2. In terms of biological role, catalyzes the deamination of dCTP to dUTP. The sequence is that of dCTP deaminase from Campylobacter jejuni (strain RM1221).